The chain runs to 452 residues: Mannan endo-1,6-alpha-mannosidase DCW1 (452 aa).

A signal peptide spans 1–18; the sequence is MKFSIYLIISLFSSFSHA. N-linked (GlcNAc...) asparagine glycosylation is found at N25, N81, N106, N130, N200, N237, N240, N262, N271, and N286. G431 carries GPI-anchor amidated glycine lipidation. A propeptide spans 432 to 452 (removed in mature form); that stretch reads AGIITAIIGASLVGSCVWLIL.

This sequence belongs to the glycosyl hydrolase 76 family.

The protein localises to the cell membrane. The enzyme catalyses Random hydrolysis of (1-&gt;6)-alpha-D-mannosidic linkages in unbranched (1-&gt;6)-mannans.. Its function is as follows. Probable mannosidase required for normal synthesis of the cell wall. The protein is Mannan endo-1,6-alpha-mannosidase DCW1 (DCW1) of Candida albicans (strain SC5314 / ATCC MYA-2876) (Yeast).